The primary structure comprises 139 residues: Ribulose bisphosphate carboxylase small subunit (139 aa).

The protein belongs to the RuBisCO small chain family. Heterohexadecamer of 8 large and 8 small subunits.

Its subcellular location is the plastid. It is found in the chloroplast. In terms of biological role, ruBisCO catalyzes two reactions: the carboxylation of D-ribulose 1,5-bisphosphate, the primary event in carbon dioxide fixation, as well as the oxidative fragmentation of the pentose substrate in the photorespiration process. Both reactions occur simultaneously and in competition at the same active site. Although the small subunit is not catalytic it is essential for maximal activity. The chain is Ribulose bisphosphate carboxylase small subunit from Trieres chinensis (Marine centric diatom).